Reading from the N-terminus, the 334-residue chain is Methionyl-tRNA formyltransferase (334 aa).

111–114 contacts (6S)-5,6,7,8-tetrahydrofolate; the sequence is SILP.

Belongs to the Fmt family.

It carries out the reaction L-methionyl-tRNA(fMet) + (6R)-10-formyltetrahydrofolate = N-formyl-L-methionyl-tRNA(fMet) + (6S)-5,6,7,8-tetrahydrofolate + H(+). Its function is as follows. Attaches a formyl group to the free amino group of methionyl-tRNA(fMet). The formyl group appears to play a dual role in the initiator identity of N-formylmethionyl-tRNA by promoting its recognition by IF2 and preventing the misappropriation of this tRNA by the elongation apparatus. This Trichormus variabilis (strain ATCC 29413 / PCC 7937) (Anabaena variabilis) protein is Methionyl-tRNA formyltransferase.